The sequence spans 69 residues: Cytochrome c oxidase subunit 8A, mitochondrial (69 aa).

The N-terminal 25 residues, Met-1–Lys-25, are a transit peptide targeting the mitochondrion. Positions Ser-2 to Leu-19 match the SIFI-degron motif. Residues Ile-26 to Gly-36 are Mitochondrial matrix-facing. The helical transmembrane segment at Ile-37–Ser-60 threads the bilayer. Residues His-61–Glu-69 are Mitochondrial intermembrane-facing.

Belongs to the cytochrome c oxidase VIII family. As to quaternary structure, component of the cytochrome c oxidase (complex IV, CIV), a multisubunit enzyme composed of 14 subunits. The complex is composed of a catalytic core of 3 subunits MT-CO1, MT-CO2 and MT-CO3, encoded in the mitochondrial DNA, and 11 supernumerary subunits COX4I1 (or COX4I2), COX5A, COX5B, COX6A1 (or COX6A2), COX6B1 (or COX6B2), COX6C, COX7A2 (or COX7A1), COX7B, COX7C, COX8A and NDUFA4, which are encoded in the nuclear genome. The complex exists as a monomer or a dimer and forms supercomplexes (SCs) in the inner mitochondrial membrane with NADH-ubiquinone oxidoreductase (complex I, CI) and ubiquinol-cytochrome c oxidoreductase (cytochrome b-c1 complex, complex III, CIII), resulting in different assemblies (supercomplex SCI(1)III(2)IV(1) and megacomplex MCI(2)III(2)IV(2)). Post-translationally, in response to mitochondrial stress, the precursor protein is ubiquitinated by the SIFI complex in the cytoplasm before mitochondrial import, leading to its degradation. Within the SIFI complex, UBR4 initiates ubiquitin chain that are further elongated or branched by KCMF1. Widely expressed.

The protein localises to the mitochondrion inner membrane. Its pathway is energy metabolism; oxidative phosphorylation. Its function is as follows. Component of the cytochrome c oxidase, the last enzyme in the mitochondrial electron transport chain which drives oxidative phosphorylation. The respiratory chain contains 3 multisubunit complexes succinate dehydrogenase (complex II, CII), ubiquinol-cytochrome c oxidoreductase (cytochrome b-c1 complex, complex III, CIII) and cytochrome c oxidase (complex IV, CIV), that cooperate to transfer electrons derived from NADH and succinate to molecular oxygen, creating an electrochemical gradient over the inner membrane that drives transmembrane transport and the ATP synthase. Cytochrome c oxidase is the component of the respiratory chain that catalyzes the reduction of oxygen to water. Electrons originating from reduced cytochrome c in the intermembrane space (IMS) are transferred via the dinuclear copper A center (CU(A)) of subunit 2 and heme A of subunit 1 to the active site in subunit 1, a binuclear center (BNC) formed by heme A3 and copper B (CU(B)). The BNC reduces molecular oxygen to 2 water molecules using 4 electrons from cytochrome c in the IMS and 4 protons from the mitochondrial matrix. The polypeptide is Cytochrome c oxidase subunit 8A, mitochondrial (COX8A) (Homo sapiens (Human)).